Reading from the N-terminus, the 1086-residue chain is MKAPSNGFLPSSNEGEKKPINSQLWHACAGPLVSLPPVGSLVVYFPQGHSEQVAASMQKQTDFIPNYPNLPSKLICLLHSVTLHADTETDEVYAQMTLQPVNKYDREALLASDMGLKLNRQPTEFFCKTLTASDTSTHGGFSVPRRAAEKIFPPLDFSMQPPAQEIVAKDLHDTTWTFRHIYRGQPKRHLLTTGWSVFVSTKRLFAGDSVLFVRDEKSQLMLGIRRANRQTPTLSSSVISSDSMHIGILAAAAHANANSSPFTIFFNPRASPSEFVVPLAKYNKALYAQVSLGMRFRMMFETEDCGVRRYMGTVTGISDLDPVRWKGSQWRNLQVGWDESTAGDRPSRVSIWEIEPVITPFYICPPPFFRPKYPRQPGMPDDELDMENAFKRAMPWMGEDFGMKDAQSSMFPGLSLVQWMSMQQNNPLSGSATPQLPSALSSFNLPNNFASNDPSKLLNFQSPNLSSANSQFNKPNTVNHISQQMQAQPAMVKSQQQQQQQQQQHQHQQQQLQQQQQLQMSQQQVQQQGIYNNGTIAVANQVSCQSPNQPTGFSQSQLQQQSMLPTGAKMTHQNINSMGNKGLSQMTSFAQEMQFQQQLEMHNSSQLLRNQQEQSSLHSLQQNLSQNPQQLQMQQQSSKPSPSQQLQLQLLQKLQQQQQQQSIPPVSSSLQPQLSALQQTQSHQLQQLLSSQNQQPLAHGNNSFPASTFMQPPQIQVSPQQQGQMSNKNLVAAGRSHSGHTDGEAPSCSTSPSANNTGHDNVSPTNFLSRNQQQGQAASVSASDSVFERASNPVQELYTKTESRISQGMMNMKSAGEHFRFKSAVTDQIDVSTAGTTYCPDVVGPVQQQQTFPLPSFGFDGDCQSHHPRNNLAFPGNLEAVTSDPLYSQKDFQNLVPNYGNTPRDIETELSSAAISSQSFGIPSIPFKPGCSNEVGGINDSGIMNGGGLWPNQTQRMRTYTKVQKRGSVGRSIDVTRYSGYDELRHDLARMFGIEGQLEDPLTSDWKLVYTDHENDILLVGDDPWEEFVNCVQNIKILSSVEVQQMSLDGDLAAIPTTNQACSETDSGNAWKVHYEDTSAAASFNR.

Residues 126-228 (FCKTLTASDT…QLMLGIRRAN (103 aa)) constitute a DNA-binding region (TF-B3). A compositionally biased stretch (polar residues) spans 454–485 (PSKLLNFQSPNLSSANSQFNKPNTVNHISQQM). 4 disordered regions span residues 454 to 504 (PSKL…QQQQ), 545 to 564 (QSPN…QSML), 624 to 647 (LSQN…QQLQ), and 659 to 788 (QQQS…SVFE). The segment covering 486-504 (QAQPAMVKSQQQQQQQQQQ) has biased composition (low complexity). Low complexity predominate over residues 659-697 (QQQSIPPVSSSLQPQLSALQQTQSHQLQQLLSSQNQQPL). Polar residues predominate over residues 700-710 (GNNSFPASTFM). The span at 711–724 (QPPQIQVSPQQQGQ) shows a compositional bias: low complexity. Residues 747-771 (SCSTSPSANNTGHDNVSPTNFLSRN) are compositionally biased toward polar residues. Residues 772-785 (QQQGQAASVSASDS) show a composition bias toward low complexity. Positions 958-1051 (RTYTKVQKRG…EVQQMSLDGD (94 aa)) constitute a PB1 domain.

This sequence belongs to the ARF family. As to quaternary structure, homodimers and heterodimers. Interacts with the auxin-responsive protein IAA1. Binds to JMJ30. Binds to ATXR2 in the nucleus.

The protein localises to the nucleus. In terms of biological role, auxin response factors (ARFs) are transcriptional factors that bind specifically to the DNA sequence 5'-TGTCTC-3' found in the auxin-responsive promoter elements (AuxREs). Could act as transcriptional activator or repressor. Formation of heterodimers with Aux/IAA proteins may alter their ability to modulate early auxin response genes expression. Involved in ethylene responses. Regulates lateral root formation through direct regulation of LBD16 and/or LBD29. Functionally redundant with ARF7. Involved in cellular dedifferentiation during callus formation on callus-inducing medium (CIM) and in an ATXR2-dependent manner. The polypeptide is Auxin response factor 19 (Arabidopsis thaliana (Mouse-ear cress)).